The chain runs to 74 residues: Protein YkgV (74 aa).

This Escherichia coli (strain K12) protein is Protein YkgV.